The following is a 1409-amino-acid chain: Receptor-type tyrosine-protein phosphatase (1409 aa).

A signal peptide spans 1-22; it reads MRINRWIWWATVILLYLRTGLA. The Extracellular segment spans residues 23–712; sequence ADFFRSSEEN…LLDTESSSSG (690 aa). Positions 32 to 53 are disordered; the sequence is NDRKSSDDLDNFNSTKIEPDKP. The Ig-like C2-type domain maps to 159–267; that stretch reads PTKCDKRDLA…TASASDLDVT (109 aa). The cysteines at positions 189 and 255 are disulfide-linked. Fibronectin type-III domains are found at residues 276–366 and 372–502; these read APRQ…TKQK and KEED…AQPD. A helical transmembrane segment spans residues 713–733; the sequence is FGIFMKIILPFLLFLAFATGV. Topologically, residues 734 to 1409 are cytoplasmic; that stretch reads TMFFVNRKGH…LADYISKTYR (676 aa). Tyrosine-protein phosphatase domains are found at residues 793 to 1072 and 1135 to 1403; these read FAQE…LAEW and LEEE…LADY. Catalysis depends on phosphocysteine intermediate residues Cys1013 and Cys1344.

It belongs to the protein-tyrosine phosphatase family. Receptor class 2A subfamily. Expressed in muscles, hypodermis and a subset of neurons. Expressed in the AVA neurons, with high expression in the anterior half of the preanal ganglion where AVA neurons contact the PHB neurons.

It localises to the cell membrane. The protein resides in the synapse. The enzyme catalyses O-phospho-L-tyrosyl-[protein] + H2O = L-tyrosyl-[protein] + phosphate. Its function is as follows. Possesses an intrinsic protein tyrosine phosphatase (PTPase) activity. Regulates egl-15 activity which is required for hypodermis-mediated fluid homeostasis and protein degradation in muscle. During the formation of neuromuscular junctions at the larval stage, negatively regulates membrane protrusion from body wall muscles. Plays a role in nicotinic acetylcholine receptor (nAChR)-mediated sensitivity to nicotine. Regulates synaptic levels of nAchR subunit lev-1 in the nerve cord. Promotes the outgrowth of the quaternary dendritic branches of the PVD sensory neurons. In parallel to the sax-7/mnr-1 pathway, also controls the extension of the PVD primary branches. Acts in the netrin/DCC pathway to mediate the formation of synapses between the AVA interneurons and the PHB sensory neurons. Also required for the formation of synapses between the AVA interneurons and the VA10 motor neurons. This is Receptor-type tyrosine-protein phosphatase from Caenorhabditis elegans.